Here is a 166-residue protein sequence, read N- to C-terminus: Large ribosomal subunit protein uL10 (166 aa).

This sequence belongs to the universal ribosomal protein uL10 family. As to quaternary structure, part of the ribosomal stalk of the 50S ribosomal subunit. The N-terminus interacts with L11 and the large rRNA to form the base of the stalk. The C-terminus forms an elongated spine to which L12 dimers bind in a sequential fashion forming a multimeric L10(L12)X complex.

Its function is as follows. Forms part of the ribosomal stalk, playing a central role in the interaction of the ribosome with GTP-bound translation factors. The polypeptide is Large ribosomal subunit protein uL10 (Pseudomonas putida (strain GB-1)).